Here is a 185-residue protein sequence, read N- to C-terminus: Photosystem I assembly protein Ycf4 (185 aa).

Helical transmembrane passes span 21–43 (NFFW…ASSY) and 63–85 (GVVM…CTIL).

This sequence belongs to the Ycf4 family.

It is found in the plastid. The protein localises to the chloroplast thylakoid membrane. Functionally, seems to be required for the assembly of the photosystem I complex. In Saccharum hybrid (Sugarcane), this protein is Photosystem I assembly protein Ycf4.